A 166-amino-acid chain; its full sequence is Thiol peroxidase (166 aa).

The Thioredoxin domain maps to 18–166; the sequence is LKVGDKAPDV…NYEALLKVLK (149 aa). Cysteine 60 (cysteine sulfenic acid (-SOH) intermediate) is an active-site residue. Cysteine 60 and cysteine 94 are joined by a disulfide.

It belongs to the peroxiredoxin family. Tpx subfamily. As to quaternary structure, homodimer.

It carries out the reaction a hydroperoxide + [thioredoxin]-dithiol = an alcohol + [thioredoxin]-disulfide + H2O. In terms of biological role, thiol-specific peroxidase that catalyzes the reduction of hydrogen peroxide and organic hydroperoxides to water and alcohols, respectively. Plays a role in cell protection against oxidative stress by detoxifying peroxides. The polypeptide is Thiol peroxidase (Helicobacter pylori (strain ATCC 700392 / 26695) (Campylobacter pylori)).